Here is a 343-residue protein sequence, read N- to C-terminus: Holliday junction branch migration complex subunit RuvB (343 aa).

Residues methionine 1–arginine 23 are disordered. A large ATPase domain (RuvB-L) region spans residues methionine 1 to tyrosine 183. Residues leucine 22, arginine 23, glycine 64, lysine 67, threonine 68, threonine 69, glutamate 130–tyrosine 132, arginine 173, tyrosine 183, and arginine 220 each bind ATP. Mg(2+) is bound at residue threonine 68. A small ATPAse domain (RuvB-S) region spans residues serine 184–asparagine 254. Residues glycine 257–aspartate 343 form a head domain (RuvB-H) region. Residues arginine 312 and arginine 317 each coordinate DNA.

The protein belongs to the RuvB family. Homohexamer. Forms an RuvA(8)-RuvB(12)-Holliday junction (HJ) complex. HJ DNA is sandwiched between 2 RuvA tetramers; dsDNA enters through RuvA and exits via RuvB. An RuvB hexamer assembles on each DNA strand where it exits the tetramer. Each RuvB hexamer is contacted by two RuvA subunits (via domain III) on 2 adjacent RuvB subunits; this complex drives branch migration. In the full resolvosome a probable DNA-RuvA(4)-RuvB(12)-RuvC(2) complex forms which resolves the HJ.

It is found in the cytoplasm. The enzyme catalyses ATP + H2O = ADP + phosphate + H(+). Its function is as follows. The RuvA-RuvB-RuvC complex processes Holliday junction (HJ) DNA during genetic recombination and DNA repair, while the RuvA-RuvB complex plays an important role in the rescue of blocked DNA replication forks via replication fork reversal (RFR). RuvA specifically binds to HJ cruciform DNA, conferring on it an open structure. The RuvB hexamer acts as an ATP-dependent pump, pulling dsDNA into and through the RuvAB complex. RuvB forms 2 homohexamers on either side of HJ DNA bound by 1 or 2 RuvA tetramers; 4 subunits per hexamer contact DNA at a time. Coordinated motions by a converter formed by DNA-disengaged RuvB subunits stimulates ATP hydrolysis and nucleotide exchange. Immobilization of the converter enables RuvB to convert the ATP-contained energy into a lever motion, pulling 2 nucleotides of DNA out of the RuvA tetramer per ATP hydrolyzed, thus driving DNA branch migration. The RuvB motors rotate together with the DNA substrate, which together with the progressing nucleotide cycle form the mechanistic basis for DNA recombination by continuous HJ branch migration. Branch migration allows RuvC to scan DNA until it finds its consensus sequence, where it cleaves and resolves cruciform DNA. This is Holliday junction branch migration complex subunit RuvB from Treponema denticola (strain ATCC 35405 / DSM 14222 / CIP 103919 / JCM 8153 / KCTC 15104).